Consider the following 122-residue polypeptide: Large ribosomal subunit protein uL14 (122 aa).

Belongs to the universal ribosomal protein uL14 family. In terms of assembly, part of the 50S ribosomal subunit. Forms a cluster with proteins L3 and L19. In the 70S ribosome, L14 and L19 interact and together make contacts with the 16S rRNA in bridges B5 and B8.

Its function is as follows. Binds to 23S rRNA. Forms part of two intersubunit bridges in the 70S ribosome. The polypeptide is Large ribosomal subunit protein uL14 (Trichodesmium erythraeum (strain IMS101)).